The chain runs to 436 residues: Gamma-glutamyl phosphate reductase (436 aa).

This sequence belongs to the gamma-glutamyl phosphate reductase family.

The protein localises to the cytoplasm. It carries out the reaction L-glutamate 5-semialdehyde + phosphate + NADP(+) = L-glutamyl 5-phosphate + NADPH + H(+). Its pathway is amino-acid biosynthesis; L-proline biosynthesis; L-glutamate 5-semialdehyde from L-glutamate: step 2/2. Functionally, catalyzes the NADPH-dependent reduction of L-glutamate 5-phosphate into L-glutamate 5-semialdehyde and phosphate. The product spontaneously undergoes cyclization to form 1-pyrroline-5-carboxylate. The polypeptide is Gamma-glutamyl phosphate reductase (Prochlorococcus marinus subsp. pastoris (strain CCMP1986 / NIES-2087 / MED4)).